The primary structure comprises 412 residues: MSQKTAGKDYLTMDDVELDNKRILLRVDFNSPMDANGNILDDRKIKSHLYTLRSLENSRVVMMSHQGRPGDKDYTTLEAHAKLATELLGRKVTYEDDIFSACARNAIKSLEKGDILLLENTRFYAEENMNRAPEEQARTQMVRKLYPLFDVFINDAFSVSHRSQCSVVGFTEVLPSVAGILMDREITGLDKGLKCHEHPAVFALGGTKAKDIVKVISDILKRGGADRILTTGVVATVFMMAIGIEVGEVNRKFIEDHKYLDQVSIASRLLKEYSGKIIVPKDIALNNDGKREEVKVDKIKGDLPIADIGPETISDYSKFLKEAKLSVFHGPAGIFELESFRLGTEELLKAAAQSNYSIAGGGHTLAAIDQLGLESKYSHLSMGGGASITYLSGEHMPGIEALKNYASRCCKD.

Substrate is bound by residues 28–30, 65–68, Arg-122, and Arg-162; these read DFN and HQGR. ATP is bound by residues Glu-336 and 361-364; that span reads GGHT.

This sequence belongs to the phosphoglycerate kinase family. Monomer.

Its subcellular location is the cytoplasm. The catalysed reaction is (2R)-3-phosphoglycerate + ATP = (2R)-3-phospho-glyceroyl phosphate + ADP. It functions in the pathway carbohydrate degradation; glycolysis; pyruvate from D-glyceraldehyde 3-phosphate: step 2/5. The chain is Phosphoglycerate kinase 1 from Methanosarcina acetivorans (strain ATCC 35395 / DSM 2834 / JCM 12185 / C2A).